The primary structure comprises 788 residues: Endonuclease MutS2 (788 aa).

334–341 (GPNTGGKT) serves as a coordination point for ATP. Residues 713 to 788 (LDLRGKRYEE…GNGATVVKFQ (76 aa)) enclose the Smr domain.

The protein belongs to the DNA mismatch repair MutS family. MutS2 subfamily. In terms of assembly, homodimer. Binds to stalled ribosomes, contacting rRNA.

Endonuclease that is involved in the suppression of homologous recombination and thus may have a key role in the control of bacterial genetic diversity. Functionally, acts as a ribosome collision sensor, splitting the ribosome into its 2 subunits. Detects stalled/collided 70S ribosomes which it binds and splits by an ATP-hydrolysis driven conformational change. Acts upstream of the ribosome quality control system (RQC), a ribosome-associated complex that mediates the extraction of incompletely synthesized nascent chains from stalled ribosomes and their subsequent degradation. Probably generates substrates for RQC. This chain is Endonuclease MutS2, found in Enterococcus faecalis (strain ATCC 700802 / V583).